An 88-amino-acid polypeptide reads, in one-letter code: UPF0237 protein spr0217 (88 aa).

The ACT domain maps to 4-77 (IITVVGKDKS…QTLNVKINIQ (74 aa)).

The protein belongs to the UPF0237 family. As to quaternary structure, homodimer.

This Streptococcus pneumoniae (strain ATCC BAA-255 / R6) protein is UPF0237 protein spr0217.